Here is a 268-residue protein sequence, read N- to C-terminus: MGLVVVGAGGRMGQTLIRTIQSIEGAKLVGAIERSGSPFLGKDAGEVTGIGTLGVAITDDPLPVFAKAHGVLDFTSPAASVEFAGLAAQARIVHVIGTTGCSAEDDEKIRAAARHATIVKSGNMSLGVNLLSVLVQKAAEALGPEDFDIEILEMHHRHKVDAPSGTALLLGEAAARGRDIALADNSVRVRDGYTGPRETGTIGFATLRGGSVIGDHSVILADTGERVVLSHHAEDRSIFARGAIKAALWAHGKKPGLYSMLDVLGLNT.

NAD(+) is bound by residues 7–12 and E33; that span reads GAGGRM. Position 34 (R34) interacts with NADP(+). Residues 97–99 and 121–124 each bind NAD(+); these read GTT and SGNM. The active-site Proton donor/acceptor is H155. H156 serves as a coordination point for (S)-2,3,4,5-tetrahydrodipicolinate. Residue K159 is the Proton donor of the active site. 165–166 is a (S)-2,3,4,5-tetrahydrodipicolinate binding site; the sequence is GT.

This sequence belongs to the DapB family.

Its subcellular location is the cytoplasm. The catalysed reaction is (S)-2,3,4,5-tetrahydrodipicolinate + NAD(+) + H2O = (2S,4S)-4-hydroxy-2,3,4,5-tetrahydrodipicolinate + NADH + H(+). It catalyses the reaction (S)-2,3,4,5-tetrahydrodipicolinate + NADP(+) + H2O = (2S,4S)-4-hydroxy-2,3,4,5-tetrahydrodipicolinate + NADPH + H(+). Its pathway is amino-acid biosynthesis; L-lysine biosynthesis via DAP pathway; (S)-tetrahydrodipicolinate from L-aspartate: step 4/4. Its function is as follows. Catalyzes the conversion of 4-hydroxy-tetrahydrodipicolinate (HTPA) to tetrahydrodipicolinate. The protein is 4-hydroxy-tetrahydrodipicolinate reductase of Brucella melitensis biotype 1 (strain ATCC 23456 / CCUG 17765 / NCTC 10094 / 16M).